Here is a 278-residue protein sequence, read N- to C-terminus: Hydroxyethylthiazole kinase (278 aa).

Position 51 (Met-51) interacts with substrate. Positions 127 and 173 each coordinate ATP. Substrate is bound at residue Gly-201.

Belongs to the Thz kinase family. Mg(2+) is required as a cofactor.

The enzyme catalyses 5-(2-hydroxyethyl)-4-methylthiazole + ATP = 4-methyl-5-(2-phosphooxyethyl)-thiazole + ADP + H(+). It participates in cofactor biosynthesis; thiamine diphosphate biosynthesis; 4-methyl-5-(2-phosphoethyl)-thiazole from 5-(2-hydroxyethyl)-4-methylthiazole: step 1/1. Catalyzes the phosphorylation of the hydroxyl group of 4-methyl-5-beta-hydroxyethylthiazole (THZ). The protein is Hydroxyethylthiazole kinase of Leptothrix cholodnii (strain ATCC 51168 / LMG 8142 / SP-6) (Leptothrix discophora (strain SP-6)).